A 118-amino-acid polypeptide reads, in one-letter code: Small ribosomal subunit protein uS13 (118 aa).

Residues 93-118 (RNLPVRGQRSKTNARTRKGPRKPIKR) are disordered.

It belongs to the universal ribosomal protein uS13 family. As to quaternary structure, part of the 30S ribosomal subunit. Forms a loose heterodimer with protein S19. Forms two bridges to the 50S subunit in the 70S ribosome.

Located at the top of the head of the 30S subunit, it contacts several helices of the 16S rRNA. In the 70S ribosome it contacts the 23S rRNA (bridge B1a) and protein L5 of the 50S subunit (bridge B1b), connecting the 2 subunits; these bridges are implicated in subunit movement. Contacts the tRNAs in the A and P-sites. The sequence is that of Small ribosomal subunit protein uS13 from Saccharophagus degradans (strain 2-40 / ATCC 43961 / DSM 17024).